Here is a 426-residue protein sequence, read N- to C-terminus: Histidine--tRNA ligase (426 aa).

This sequence belongs to the class-II aminoacyl-tRNA synthetase family. In terms of assembly, homodimer.

It localises to the cytoplasm. The catalysed reaction is tRNA(His) + L-histidine + ATP = L-histidyl-tRNA(His) + AMP + diphosphate + H(+). The protein is Histidine--tRNA ligase of Streptococcus pyogenes serotype M6 (strain ATCC BAA-946 / MGAS10394).